The chain runs to 358 residues: Protein Wnt-8b (358 aa).

The first 23 residues, 1–23, serve as a signal peptide directing secretion; sequence MFMHLEVYYYAFILMAHMKTCCG. The cysteines at positions 55 and 66 are disulfide-linked. N-linked (GlcNAc...) asparagine glycosylation occurs at asparagine 104. 10 disulfides stabilise this stretch: cysteine 105-cysteine 113, cysteine 115-cysteine 133, cysteine 181-cysteine 195, cysteine 183-cysteine 190, cysteine 257-cysteine 295, cysteine 273-cysteine 288, cysteine 292-cysteine 334, cysteine 310-cysteine 325, cysteine 312-cysteine 322, and cysteine 317-cysteine 318. Serine 187 carries O-palmitoleoyl serine lipidation. N-linked (GlcNAc...) asparagine glycosylation is found at asparagine 260 and asparagine 279. A glycan (N-linked (GlcNAc...) asparagine) is linked at asparagine 345.

It belongs to the Wnt family. In terms of processing, palmitoleoylation is required for efficient binding to frizzled receptors. Depalmitoleoylation leads to Wnt signaling pathway inhibition. Post-translationally, proteolytic processing by tiki1 and tiki2 promotes oxidation and formation of large disulfide-bond oligomers, leading to inactivation of wnt8b. Hindbrain r1, 2 and 5.

The protein resides in the secreted. It localises to the extracellular space. It is found in the extracellular matrix. Functionally, ligand for fzd8a, a member of the G-protein coupled frizzled receptor family. May play a role in the establishment of polarity in the nervous system. Involved in canonical Wnt signaling pathway. During embryonic development, required for the acquisition of caudal diencephalic fate. Antagonizes eye specification. The chain is Protein Wnt-8b (wnt8b) from Danio rerio (Zebrafish).